The chain runs to 313 residues: Ornithine carbamoyltransferase (313 aa).

Carbamoyl phosphate is bound by residues 57–60 (STRT), Arg-108, and 135–138 (HPTQ). L-ornithine contacts are provided by residues Asn-167, Asp-231, and 235–236 (SM). Carbamoyl phosphate-binding positions include 272 to 273 (CL) and Arg-300.

Belongs to the aspartate/ornithine carbamoyltransferase superfamily. OTCase family.

The protein localises to the cytoplasm. It catalyses the reaction carbamoyl phosphate + L-ornithine = L-citrulline + phosphate + H(+). The protein operates within amino-acid biosynthesis; L-arginine biosynthesis; L-arginine from L-ornithine and carbamoyl phosphate: step 1/3. Reversibly catalyzes the transfer of the carbamoyl group from carbamoyl phosphate (CP) to the N(epsilon) atom of ornithine (ORN) to produce L-citrulline. The polypeptide is Ornithine carbamoyltransferase (Thermotoga maritima (strain ATCC 43589 / DSM 3109 / JCM 10099 / NBRC 100826 / MSB8)).